The primary structure comprises 260 residues: Granzyme A (260 aa).

Residues M1–C26 form the signal peptide. A propeptide spans E27–R28 (activation peptide). Residues I29–K257 enclose the Peptidase S1 domain. C54 and C70 are oxidised to a cystine. Catalysis depends on charge relay system residues H69 and D113. 3 disulfide bridges follow: C147–C217, C178–C196, and C207–C232. 2 N-linked (GlcNAc...) asparagine glycosylation sites follow: N157 and N169. Residue S211 is the Charge relay system of the active site.

The protein belongs to the peptidase S1 family. Granzyme subfamily. Homodimer; disulfide-linked. Interacts with APEX1. Found in cytotoxic lymphocytes and in normal lymphoid tissues such as thymus and spleen. As to expression, more abundant in lymphoid tissues than isoform HF2.

The protein localises to the secreted. It is found in the cytoplasmic granule. The catalysed reaction is Hydrolysis of proteins, including fibronectin, type IV collagen and nucleolin. Preferential cleavage: -Arg-|-Xaa-, -Lys-|-Xaa- &gt;&gt; -Phe-|-Xaa- in small molecule substrates.. Abundant protease in the cytosolic granules of cytotoxic T-cells and NK-cells which activates caspase-independent pyroptosis when delivered into the target cell through the immunological synapse. It cleaves after Lys or Arg. Cleaves APEX1 after 'Lys-31' and destroys its oxidative repair activity. Cleaves the nucleosome assembly protein SET after 'Lys-189', which disrupts its nucleosome assembly activity and allows the SET complex to translocate into the nucleus to nick and degrade the DNA. The protein is Granzyme A (Gzma) of Mus musculus (Mouse).